We begin with the raw amino-acid sequence, 340 residues long: Proline-rich transmembrane protein 2 (340 aa).

Residues Met1–Gly261 are disordered. Residues Met1 to Tyr268 are Cytoplasmic-facing. At Ser28 the chain carries Phosphoserine. Thr74 is subject to Phosphothreonine. Pro residues-rich tracts occupy residues Pro131 to Ala155 and Ala197 to Lys207. Ser238 carries the post-translational modification Phosphoserine. At Arg240 the chain carries Omega-N-methylarginine. A phosphoserine mark is found at Ser248 and Ser249. Residues Ile269 to Ala289 constitute an intramembrane region (helical). Residues Tyr290–Ser317 lie on the Cytoplasmic side of the membrane. The chain crosses the membrane as a helical span at residues Ile318–Val338. Topologically, residues Tyr339 to Lys340 are extracellular.

The protein belongs to the CD225/Dispanin family. Component of the outer core of AMPAR complex. AMPAR complex consists of an inner core made of 4 pore-forming GluA/GRIA proteins (GRIA1, GRIA2, GRIA3 and GRIA4) and 4 major auxiliary subunits arranged in a twofold symmetry. One of the two pairs of distinct binding sites is occupied either by CNIH2, CNIH3 or CACNG2, CACNG3. The other harbors CACNG2, CACNG3, CACNG4, CACNG8 or GSG1L. This inner core of AMPAR complex is complemented by outer core constituents binding directly to the GluA/GRIA proteins at sites distinct from the interaction sites of the inner core constituents. Outer core constituents include at least PRRT1, PRRT2, CKAMP44/SHISA9, FRRS1L and NRN1. The proteins of the inner and outer core serve as a platform for other, more peripherally associated AMPAR constituents. Alone or in combination, these auxiliary subunits control the gating and pharmacology of the AMPAR complex and profoundly impact their biogenesis and protein processing. Interacts with intersectin 1/ITSN1. Interacts with SNARE complex components, including SNAP25, STX1A, SYT1 and SYT2; this interaction may inhibit SNARE complex formation.

It localises to the cell membrane. The protein resides in the presynaptic cell membrane. The protein localises to the synapse. Its subcellular location is the cell projection. It is found in the axon. It localises to the cytoplasmic vesicle. The protein resides in the secretory vesicle. The protein localises to the synaptic vesicle membrane. Its subcellular location is the postsynaptic density membrane. It is found in the dendritic spine. Functionally, as a component of the outer core of AMPAR complex, may be involved in synaptic transmission in the central nervous system. In hippocampal neurons, in presynaptic terminals, plays an important role in the final steps of neurotransmitter release, possibly by regulating Ca(2+)-sensing. In the cerebellum, may inhibit SNARE complex formation and down-regulate short-term facilitation. The polypeptide is Proline-rich transmembrane protein 2 (PRRT2) (Pongo abelii (Sumatran orangutan)).